The primary structure comprises 491 residues: Pyruvate carboxylase subunit A (491 aa).

One can recognise a Biotin carboxylation domain in the interval 1 to 445; the sequence is MFSKILVANR…HTHFVDEYRR (445 aa). 3 residues coordinate ATP: Lys-116, Glu-200, and His-235. Residues 120–316 form the ATP-grasp domain; that stretch reads KKLMKKAGVP…LVKEQIRVAS (197 aa). Arg-291 is an active-site residue.

Heterooctamer of four A and four B subunits. Mg(2+) serves as cofactor. Mn(2+) is required as a cofactor. The cofactor is Co(2+).

The enzyme catalyses hydrogencarbonate + pyruvate + ATP = oxaloacetate + ADP + phosphate + H(+). It participates in carbohydrate biosynthesis; gluconeogenesis. Inhibited by ADP and alpha-ketoglutarate. Its function is as follows. Pyruvate carboxylase catalyzes a 2-step reaction, involving the ATP-dependent carboxylation of the covalently attached biotin in the first step and the transfer of the carboxyl group to pyruvate in the second. This chain is Pyruvate carboxylase subunit A (pycA), found in Methanothermobacter thermautotrophicus (strain ATCC 29096 / DSM 1053 / JCM 10044 / NBRC 100330 / Delta H) (Methanobacterium thermoautotrophicum).